The sequence spans 1280 residues: Papilin (1280 aa).

Residues 1–20 form the signal peptide; sequence MQLFPLLFSLLLTSTPGSWA. 5 TSP type-1 domains span residues 27–81, 305–362, 363–422, 424–482, and 485–540; these read SDTW…ESCP, RGFS…QPCP, KTKR…ACNL, HCAV…EACP, and RGQA…QPCH. Disulfide bonds link Cys-39–Cys-75, Cys-43–Cys-80, and Cys-54–Cys-65. Intrachain disulfides connect Cys-425-Cys-464, Cys-436-Cys-476, and Cys-440-Cys-481. Disordered regions lie at residues 541 to 626 and 672 to 715; these read LPQE…DCRH and PQQA…PSEC. Over residues 585-599 the composition is skewed to polar residues; that stretch reads AQSNPREGQDPNLSS. Positions 706-715 are enriched in basic and acidic residues; that stretch reads QAHEGEPSEC. Intrachain disulfides connect Cys-750–Cys-800, Cys-759–Cys-783, and Cys-775–Cys-796. The BPTI/Kunitz inhibitor domain occupies 750-800; that stretch reads CLLPSAQGSCGDWAARWYFVASVGRCNRFWYGGCHGNANNFASEQECMNTC. Residues 800–902 form a disordered region; it reads CRGQHGPRRP…AVPPTHSPSY (103 aa). The span at 879–891 shows a compositional bias: basic and acidic residues; the sequence is IRPRVPGLDREAR. Residues 900–990 enclose the Ig-like C2-type 1 domain; the sequence is PSYRIRLAGS…EPQEIQLRVT (91 aa). Residues Cys-926 and Cys-973 are joined by a disulfide bond. Positions 1002-1012 are enriched in basic and acidic residues; the sequence is PRHFPEPRNPD. The tract at residues 1002 to 1042 is disordered; it reads PRHFPEPRNPDLGHGPPHRGTGAEAGGHRVLSPSHPRPATR. Ig-like C2-type domains follow at residues 1039-1128 and 1133-1218; these read PATR…VQLR and LTIT…TEVK. Cystine bridges form between Cys-1065–Cys-1112 and Cys-1154–Cys-1202. The 40-residue stretch at 1231-1270 folds into the PLAC domain; it reads LGKDCIDQPELANCALILQAQLCGNEYYSSFCCASCSRFQ.

The protein belongs to the papilin family.

It localises to the secreted. This chain is Papilin (Papln), found in Mus musculus (Mouse).